The sequence spans 510 residues: Cytochrome P450 11B2, mitochondrial (510 aa).

The transit peptide at 1–34 (MGACDNDFIELHSRVTADVWLARPWQCLHRTRAL) directs the protein to the mitochondrion. Phe391 lines the 21-hydroxyprogesterone pocket. A heme-binding site is contributed by Cys457.

The protein belongs to the cytochrome P450 family. It depends on heme as a cofactor. As to expression, adrenal cortex.

The protein resides in the mitochondrion inner membrane. The enzyme catalyses a steroid + 2 reduced [adrenodoxin] + O2 + 2 H(+) = an 11beta-hydroxysteroid + 2 oxidized [adrenodoxin] + H2O. It catalyses the reaction 21-hydroxyprogesterone + 2 reduced [adrenodoxin] + O2 + 2 H(+) = corticosterone + 2 oxidized [adrenodoxin] + H2O. The catalysed reaction is corticosterone + 2 reduced [adrenodoxin] + O2 + 2 H(+) = 18-hydroxycorticosterone + 2 oxidized [adrenodoxin] + H2O. It carries out the reaction 18-hydroxycorticosterone + 2 reduced [adrenodoxin] + O2 + 2 H(+) = aldosterone + 2 oxidized [adrenodoxin] + 2 H2O. The enzyme catalyses 11-deoxycortisol + 2 reduced [adrenodoxin] + O2 + 2 H(+) = cortisol + 2 oxidized [adrenodoxin] + H2O. It catalyses the reaction cortisol + 2 reduced [adrenodoxin] + O2 + 2 H(+) = 18-hydroxycortisol + 2 oxidized [adrenodoxin] + H2O. The catalysed reaction is 21-hydroxyprogesterone + 2 reduced [adrenodoxin] + O2 + 2 H(+) = 18-hydroxy-11-deoxycorticosterone + 2 oxidized [adrenodoxin] + H2O. It carries out the reaction 18-hydroxycortisol + 2 reduced [adrenodoxin] + O2 + 2 H(+) = 18-oxocortisol + 2 oxidized [adrenodoxin] + 2 H2O. Its pathway is steroid biosynthesis. Functionally, a cytochrome P450 monooxygenase that catalyzes the biosynthesis of aldosterone, the main mineralocorticoid responsible for salt and water homeostasis. Catalyzes three sequential oxidative reactions of 11-deoxycorticosterone (21-hydroxyprogesterone), namely 11-beta hydroxylation, followed by two successive oxidations at C18 yielding 18-hydroxy and then 18-oxo intermediates (that do not leave the enzyme active site during the consecutive hydroxylation reactions), and end with the formation of aldosterone. Can also produce 18-hydroxycortisol and 18-oxocortisol, derived from successive oxidations of cortisol at C18, normally found at very low levels, but significantly increased in primary aldosteronism, the most common form of secondary hypertension. Mechanistically, uses molecular oxygen inserting one oxygen atom into a substrate and reducing the second into a water molecule. Two electrons are provided by NADPH via a two-protein mitochondrial transfer system comprising flavoprotein FDXR (adrenodoxin/ferredoxin reductase) and nonheme iron-sulfur protein FDX1 or FDX2 (adrenodoxin/ferredoxin). Could also be involved in the androgen metabolic pathway. This chain is Cytochrome P450 11B2, mitochondrial (Cyp11b2), found in Rattus norvegicus (Rat).